Reading from the N-terminus, the 71-residue chain is Long neurotoxin 1 (71 aa).

Cystine bridges form between C3–C20, C14–C41, C26–C30, C45–C56, and C57–C62.

This sequence belongs to the three-finger toxin family. Long-chain subfamily. Type II alpha-neurotoxin sub-subfamily. As to expression, expressed by the venom gland.

The protein localises to the secreted. In terms of biological role, binds with high affinity to muscular (alpha-1/CHRNA1) and neuronal (alpha-7/CHRNA7) nicotinic acetylcholine receptor (nAChR) and hinders acetylcholine binding to the receptor, thereby impairing neuromuscular and neuronal transmission. The chain is Long neurotoxin 1 from Naja annulata annulata (Banded water cobra).